Reading from the N-terminus, the 994-residue chain is Protein translocase subunit SecA (994 aa).

ATP is bound by residues Gln85, 103–107 (GEGKT), and Asp492. Residues 868–888 (IPDGAGPVADAQPVRPAAARQ) show a composition bias toward low complexity. A disordered region spans residues 868 to 994 (IPDGAGPVAD…HGDPARRNTE (127 aa)). Residues 889-900 (TPPPPSPVPSAP) are compositionally biased toward pro residues. 4 residues coordinate Zn(2+): Cys973, Cys975, Cys984, and His985. The span at 984–994 (CHGDPARRNTE) shows a compositional bias: basic and acidic residues.

It belongs to the SecA family. As to quaternary structure, monomer and homodimer. Part of the essential Sec protein translocation apparatus which comprises SecA, SecYEG and auxiliary proteins SecDF. Other proteins may also be involved. Zn(2+) serves as cofactor.

It localises to the cell membrane. The protein localises to the cytoplasm. The enzyme catalyses ATP + H2O + cellular proteinSide 1 = ADP + phosphate + cellular proteinSide 2.. In terms of biological role, part of the Sec protein translocase complex. Interacts with the SecYEG preprotein conducting channel. Has a central role in coupling the hydrolysis of ATP to the transfer of proteins into and across the cell membrane, serving as an ATP-driven molecular motor driving the stepwise translocation of polypeptide chains across the membrane. This is Protein translocase subunit SecA from Frankia casuarinae (strain DSM 45818 / CECT 9043 / HFP020203 / CcI3).